Consider the following 105-residue polypeptide: UPF0473 protein SAK_2028 (105 aa).

The protein belongs to the UPF0473 family.

The chain is UPF0473 protein SAK_2028 from Streptococcus agalactiae serotype Ia (strain ATCC 27591 / A909 / CDC SS700).